The following is a 283-amino-acid chain: Putative aquaporin NIP4-1 (283 aa).

Residue Met-1 is modified to N-acetylmethionine. The next 2 helical transmembrane spans lie at 45-65 and 70-90; these read LIAE…VVVV and GGTI…MVMI. The NPA 1 signature appears at 102–104; the sequence is NPA. The next 3 membrane-spanning stretches (helical) occupy residues 122 to 142, 161 to 181, and 189 to 209; these read LYIG…RLMF, ALVA…GVAT, and LAGI…GPIS. Positions 214 to 216 match the NPA 2 motif; sequence NPA. Residues 231–251 form a helical membrane-spanning segment; sequence IWVYIVGPVLGVISGGFVYNL. Phosphoserine is present on Ser-267.

This sequence belongs to the MIP/aquaporin (TC 1.A.8) family. NIP (TC 1.A.8.12) subfamily.

It is found in the membrane. In terms of biological role, potential aquaporin, which may facilitate the transport of water and small neutral solutes across cell membranes. In Arabidopsis thaliana (Mouse-ear cress), this protein is Putative aquaporin NIP4-1 (NIP4-1).